The chain runs to 590 residues: Dystrobrevin-1 (590 aa).

Residues 1-10 are compositionally biased toward gly residues; the sequence is MLWSNGGGGP. The segment at 1-25 is disordered; it reads MLWSNGGGGPREPSSAPSPDHHRAM. A ZZ-type zinc finger spans residues 259–315; it reads YHPVVCDACQVRSFTGFRYKCQRCANYQLCQSCFWRGRTSQNHSNEHEMKEYSSYKS. Cys-264, Cys-267, Cys-279, Cys-282, Cys-288, Cys-291, His-301, and His-305 together coordinate Zn(2+). Residues 434-508 are a coiled coil; that stretch reads SMVGDERTLI…EHLMAQLNTG (75 aa). Residues 468–590 are essential for interaction with ctn-1; it reads DGLAGLRDRK…DENGVTINGF (123 aa). An essential for interaction with dys-1 region spans residues 484–490; sequence MFEMQQR.

The protein belongs to the dystrophin family. Dystrobrevin subfamily. In terms of assembly, component of the dystrophin glycoprotein complex (DGC). Interacts with dystrophin (dys-1) and syntrophin (stn-1) to form the DGC. Interacts (via C-terminus) with ctn-1 (via N-terminus); the interaction is required for localization of the dystrophin complex and ctn-1 near dense bodies in muscle cells. From late embryogenesis to adulthood, expressed in neurons and muscles; particularly strong in the ventral nerve cord and in muscles of the body wall, head pharyngeal, and vulva; weaker in the intestinal muscle (at protein level).

It is found in the cytoplasm. Plays a role in cholinergic transmission and as a functional partner of dystrophin (dys-1), necessary for muscle maintenance. Required for localization of ctn-1 near dense bodies in muscle cells. This Caenorhabditis elegans protein is Dystrobrevin-1.